The following is a 194-amino-acid chain: MAIKLIVGLANPGAEYAATRHNAGAWYVDLLAERLRAPLREEPKFFGYTSRITLEGEDVRLLVPTTFMNLSGKAVGAMASFYRIQPDEILVAHDELDLPPGVAKFKLGGGHGGHNGLKDIISKLGNNPNFHRLRVGIGHPGDKNKVVGFVLGKPPVSEQKLIDEAIDEAARCTELWFKEGLAKATSRLHTFKAQ.

Position 16 (Tyr-16) interacts with tRNA. His-21 functions as the Proton acceptor in the catalytic mechanism. Phe-67, Asn-69, and Asn-115 together coordinate tRNA.

It belongs to the PTH family. In terms of assembly, monomer.

Its subcellular location is the cytoplasm. The catalysed reaction is an N-acyl-L-alpha-aminoacyl-tRNA + H2O = an N-acyl-L-amino acid + a tRNA + H(+). Its function is as follows. Hydrolyzes ribosome-free peptidyl-tRNAs (with 1 or more amino acids incorporated), which drop off the ribosome during protein synthesis, or as a result of ribosome stalling. In terms of biological role, catalyzes the release of premature peptidyl moieties from peptidyl-tRNA molecules trapped in stalled 50S ribosomal subunits, and thus maintains levels of free tRNAs and 50S ribosomes. The polypeptide is Peptidyl-tRNA hydrolase (Salmonella agona (strain SL483)).